A 319-amino-acid polypeptide reads, in one-letter code: Putative GPI-anchor transamidase (319 aa).

The signal sequence occupies residues 1–16; it reads MRHVLLIFCAIIATEA. Residues histidine 156 and cysteine 198 contribute to the active site. An N-linked (GlcNAc...) asparagine glycan is attached at asparagine 257.

It belongs to the peptidase C13 family.

It participates in glycolipid biosynthesis; glycosylphosphatidylinositol-anchor biosynthesis. In terms of biological role, mediates GPI anchoring in the endoplasmic reticulum, by replacing a protein's C-terminal GPI attachment signal peptide with a pre-assembled GPI. During this transamidation reaction, the GPI transamidase forms a carbonyl intermediate with the substrate protein. The chain is Putative GPI-anchor transamidase from Caenorhabditis elegans.